The following is a 398-amino-acid chain: Polyferredoxin protein VhuB (398 aa).

11 consecutive 4Fe-4S ferredoxin-type domains span residues 2-31, 25-53, 54-83, 82-111, 123-152, 152-181, 191-219, 220-249, 259-291, 300-331, and 339-368; these read AGIK…IAPF, AIEI…VENN, GKLI…VDDR, DRFP…IPGK, QEPI…IEDE, ELAV…VAGK, KSFT…YNRE, DLIV…LEVE, EGLV…MINQ, TKTD…MGKI, and NRIE…LTGD. Cysteine 11, cysteine 14, cysteine 17, cysteine 21, cysteine 34, cysteine 37, cysteine 40, cysteine 44, cysteine 63, cysteine 66, cysteine 69, cysteine 73, cysteine 91, cysteine 94, cysteine 97, cysteine 101, cysteine 132, cysteine 135, cysteine 138, cysteine 142, cysteine 161, cysteine 164, cysteine 167, cysteine 171, cysteine 199, cysteine 202, cysteine 205, cysteine 209, cysteine 229, cysteine 232, cysteine 235, cysteine 239, cysteine 268, cysteine 271, cysteine 274, cysteine 278, cysteine 311, cysteine 314, cysteine 317, cysteine 321, cysteine 348, cysteine 351, cysteine 354, cysteine 358, cysteine 377, cysteine 380, cysteine 383, and cysteine 387 together coordinate [4Fe-4S] cluster.

[4Fe-4S] cluster serves as cofactor.

The sequence is that of Polyferredoxin protein VhuB (vhuB) from Methanococcus voltae.